Consider the following 388-residue polypeptide: Succinate--CoA ligase [ADP-forming] subunit beta (388 aa).

Positions 9 to 244 constitute an ATP-grasp domain; it reads KEILRKFGVA…LDEEDPAEIE (236 aa). ATP-binding positions include Lys-46, 53 to 55, Glu-99, Ala-102, and Glu-107; that span reads GRG. Residues Asn-199 and Asp-213 each coordinate Mg(2+). Residues Asn-264 and 321 to 323 each bind substrate; that span reads GIM.

This sequence belongs to the succinate/malate CoA ligase beta subunit family. As to quaternary structure, heterotetramer of two alpha and two beta subunits. Mg(2+) serves as cofactor.

It catalyses the reaction succinate + ATP + CoA = succinyl-CoA + ADP + phosphate. It carries out the reaction GTP + succinate + CoA = succinyl-CoA + GDP + phosphate. Its pathway is carbohydrate metabolism; tricarboxylic acid cycle; succinate from succinyl-CoA (ligase route): step 1/1. In terms of biological role, succinyl-CoA synthetase functions in the citric acid cycle (TCA), coupling the hydrolysis of succinyl-CoA to the synthesis of either ATP or GTP and thus represents the only step of substrate-level phosphorylation in the TCA. The beta subunit provides nucleotide specificity of the enzyme and binds the substrate succinate, while the binding sites for coenzyme A and phosphate are found in the alpha subunit. This Burkholderia cenocepacia (strain HI2424) protein is Succinate--CoA ligase [ADP-forming] subunit beta.